The sequence spans 894 residues: Glutamate receptor 3 (894 aa).

The signal sequence occupies residues 1-28 (MARQKKMGQSVLRAVFFLVLGLLGHSHG). Residues 29-552 (GFPNTISIGG…GVFSFLDPLA (524 aa)) lie on the Extracellular side of the membrane. N-linked (GlcNAc...) asparagine glycosylation is found at Asn63, Asn266, Asn380, Asn415, and Asn422. Cys91 and Cys340 are disulfide-bonded. L-glutamate-binding residues include Pro508, Thr510, and Arg515. The chain crosses the membrane as a helical span at residues 553-573 (YEIWMCIVFAYIGVSVVLFLV). Residues 574–602 (SRFSPYEWHLEDNNEEPRDPQSPPDPPNE) are Cytoplasmic-facing. The helical; Pore-forming intramembrane region spans 603 to 618 (FGIFNSLWFSLGAFMQ). The stretch at 619–621 (QGC) is an intramembrane region. Cys621 carries the S-palmitoyl cysteine lipid modification. At 622–627 (DISPRS) the chain is on the cytoplasmic side. The chain crosses the membrane as a helical span at residues 628-648 (LSGRIVGGVWWFFTLIIISSY). The Extracellular segment spans residues 649 to 823 (TANLAAFLTV…DKTSALSLSN (175 aa)). The L-glutamate site is built by Ser686, Thr687, and Glu737. A disulfide bridge connects residues Cys750 and Cys805. The helical transmembrane segment at 824–844 (VAGVFYILVGGLGLAMMVALI) threads the bilayer. The Cytoplasmic portion of the chain corresponds to 845–894 (EFCYKSRAESKRMKLTKNTQNFKPAPATNTQNYATYREGYNVYGTESVKI). Cys847 carries the S-palmitoyl cysteine lipid modification. A phosphotyrosine mark is found at Tyr877 and Tyr887.

Belongs to the glutamate-gated ion channel (TC 1.A.10.1) family. GRIA3 subfamily. Homotetramer or heterotetramer of pore-forming glutamate receptor subunits. Tetramers may be formed by the dimerization of dimers. Interacts with PICK1, GRIP1 and GRIP2. Found in a complex with GRIA1, GRIA2, GRIA4, CNIH2, CNIH3, CACNG2, CACNG3, CACNG4, CACNG5, CACNG7 and CACNG8. Interacts with CACNG5. Found in a complex with GRIA1, GRIA2, GRIA4, DLG4, CACNG8 and CNIH2.

It localises to the cell membrane. The protein resides in the postsynaptic cell membrane. It is found in the postsynaptic density membrane. The enzyme catalyses Ca(2+)(in) = Ca(2+)(out). In terms of biological role, ionotropic glutamate receptor that functions as a ligand-gated cation channel, gated by L-glutamate and glutamatergic agonists such as alpha-amino-3-hydroxy-5-methyl-4-isoxazolepropionic acid (AMPA), quisqualic acid, and kainic acid. L-glutamate acts as an excitatory neurotransmitter at many synapses in the central nervous system and plays an important role in fast excitatory synaptic transmission by inducing long-term potentiation. Binding of the excitatory neurotransmitter L-glutamate induces a conformation change, leading to the opening of the cation channel, and thereby converts the chemical signal to an electrical impulse upon entry of calcium. The receptor then desensitizes rapidly and enters a transient inactive state, characterized by the presence of bound agonist. In the presence of CACNG8, shows resensitization which is characterized by a delayed accumulation of current flux upon continued application of glutamate. The sequence is that of Glutamate receptor 3 from Homo sapiens (Human).